A 106-amino-acid polypeptide reads, in one-letter code: Replication protein A 14 kDa subunit B (106 aa).

Methionine 1 is subject to N-acetylmethionine.

Belongs to the replication factor A protein 3 family. In terms of assembly, component of the heterotrimeric canonical replication protein A complex (RPA).

The protein localises to the nucleus. In terms of biological role, as part of the replication protein A (RPA/RP-A), a single-stranded DNA-binding heterotrimeric complex, may play an essential role in DNA replication, recombination and repair. Binds and stabilizes single-stranded DNA intermediates, preventing complementary DNA reannealing and recruiting different proteins involved in DNA metabolism. This Arabidopsis thaliana (Mouse-ear cress) protein is Replication protein A 14 kDa subunit B (RPA3B).